The following is a 125-amino-acid chain: MAVCIIDHDNIRGVIYFEPVHGKDKVLGSVIGLKSGTYSLIIHRYGDISQGCDSIGSPEIFIGNIFVNRYGVAYVYLDTDVNIFTIIGKALSISKNDQRLACEVIGISYINEKIIHFLTINENGV.

Cysteines 52 and 102 form a disulfide.

The protein belongs to the Cu-Zn superoxide dismutase family.

The protein resides in the virion. Its subcellular location is the host cytoplasm. Functionally, superoxide dismutase-like protein with no enzymatic activity. This is Cu-Zn superoxide dismutase-like protein OPG175 (OPG175) from Homo sapiens (Human).